We begin with the raw amino-acid sequence, 115 residues long: U17-barytoxin-Tl1c (115 aa).

Residues 1 to 20 form the signal peptide; that stretch reads MKTIIVFLSLLVLATKFGDA. Residues 21 to 74 constitute a propeptide that is removed on maturation; that stretch reads KEGVNQKQKKEVTQNEFREEYLNEMAAMSLVQQLEAIERALFENEAGRNSRQKR. 3 disulfides stabilise this stretch: cysteine 75/cysteine 89, cysteine 82/cysteine 94, and cysteine 88/cysteine 109.

This sequence belongs to the neurotoxin 14 (magi-1) family. 03 (ICK-30-40) subfamily. In terms of tissue distribution, expressed by the venom gland.

Its subcellular location is the secreted. In terms of biological role, ion channel inhibitor. This is U17-barytoxin-Tl1c from Trittame loki (Brush-footed trapdoor spider).